The primary structure comprises 360 residues: 3-dehydroquinate synthase (360 aa).

Residues 69–74 (DGEAYK), 103–107 (GVIGD), 127–128 (TT), Lys140, Lys149, and 167–170 (CLQT) contribute to the NAD(+) site. The Zn(2+) site is built by Glu182, His245, and His262.

It belongs to the sugar phosphate cyclases superfamily. Dehydroquinate synthase family. Co(2+) serves as cofactor. It depends on Zn(2+) as a cofactor. Requires NAD(+) as cofactor.

The protein resides in the cytoplasm. The enzyme catalyses 7-phospho-2-dehydro-3-deoxy-D-arabino-heptonate = 3-dehydroquinate + phosphate. The protein operates within metabolic intermediate biosynthesis; chorismate biosynthesis; chorismate from D-erythrose 4-phosphate and phosphoenolpyruvate: step 2/7. Catalyzes the conversion of 3-deoxy-D-arabino-heptulosonate 7-phosphate (DAHP) to dehydroquinate (DHQ). This Aeromonas hydrophila subsp. hydrophila (strain ATCC 7966 / DSM 30187 / BCRC 13018 / CCUG 14551 / JCM 1027 / KCTC 2358 / NCIMB 9240 / NCTC 8049) protein is 3-dehydroquinate synthase.